We begin with the raw amino-acid sequence, 80 residues long: Acyl carrier protein (80 aa).

Residues 2–77 (KNIEERIKKI…KSIDFIQKKN (76 aa)) form the Carrier domain. Serine 37 carries the O-(pantetheine 4'-phosphoryl)serine modification.

This sequence belongs to the acyl carrier protein (ACP) family. 4'-phosphopantetheine is transferred from CoA to a specific serine of apo-ACP by AcpS. This modification is essential for activity because fatty acids are bound in thioester linkage to the sulfhydryl of the prosthetic group.

Its subcellular location is the cytoplasm. The protein operates within lipid metabolism; fatty acid biosynthesis. Its function is as follows. Carrier of the growing fatty acid chain in fatty acid biosynthesis. The protein is Acyl carrier protein of Buchnera aphidicola subsp. Acyrthosiphon pisum (strain APS) (Acyrthosiphon pisum symbiotic bacterium).